We begin with the raw amino-acid sequence, 258 residues long: Clathrin light chain 3 (258 aa).

The span at 1-18 shows a compositional bias: polar residues; that stretch reads MSSTLSNEESGLGDSNRS. The tract at residues 1–96 is disordered; that stretch reads MSSTLSNEES…PPPSAMEKEE (96 aa). S2 carries the post-translational modification N-acetylserine. A compositionally biased stretch (low complexity) spans 34-50; it reads SRFQSQRFDSSFSNFDS. Residues 66 to 79 show a composition bias toward polar residues; sequence RPETQSPPSINSFD. Residues 90-152 are involved in binding clathrin heavy chain; that stretch reads SAMEKEEGFA…TIENNKKLNR (63 aa). The stretch at 105–164 forms a coiled coil; the sequence is RLNALRLEEKEKEEKEMVQQILEAAEQYKAEFYSKRNVTIENNKKLNREKEKFFLENQEK. Residues 224 to 234 show a composition bias toward basic residues; the sequence is LKHNPPTHMKP. The interval 224–258 is disordered; it reads LKHNPPTHMKPKLPSPSGADPNVSVSEQVTVTEKL. Positions 246-258 are enriched in polar residues; the sequence is VSVSEQVTVTEKL.

This sequence belongs to the clathrin light chain family. As to quaternary structure, clathrin coats are formed from molecules containing 3 heavy chains and 3 light chains.

It localises to the cytoplasmic vesicle membrane. It is found in the membrane. Its subcellular location is the coated pit. In terms of biological role, clathrin is the major protein of the polyhedral coat of coated pits and vesicles. This is Clathrin light chain 3 from Arabidopsis thaliana (Mouse-ear cress).